The chain runs to 348 residues: Protein RecA (348 aa).

Residue 66-73 (GPESSGKT) participates in ATP binding.

It belongs to the RecA family.

The protein resides in the cytoplasm. Can catalyze the hydrolysis of ATP in the presence of single-stranded DNA, the ATP-dependent uptake of single-stranded DNA by duplex DNA, and the ATP-dependent hybridization of homologous single-stranded DNAs. It interacts with LexA causing its activation and leading to its autocatalytic cleavage. The polypeptide is Protein RecA (Neisseria meningitidis serogroup B (strain ATCC BAA-335 / MC58)).